The sequence spans 217 residues: Thymidylate kinase (217 aa).

14 to 21 (GNEGSGKT) lines the ATP pocket.

Belongs to the thymidylate kinase family.

The catalysed reaction is dTMP + ATP = dTDP + ADP. Phosphorylation of dTMP to form dTDP in both de novo and salvage pathways of dTTP synthesis. This is Thymidylate kinase from Orientia tsutsugamushi (strain Ikeda) (Rickettsia tsutsugamushi).